The chain runs to 599 residues: Dictomallein-2 (599 aa).

An N-terminal signal peptide occupies residues 1–20 (MKLILIYLILVFNLFNFINC). The 263-residue stretch at 145–407 (PDVGQDYTLK…QNYFKNSIYY (263 aa)) folds into the Peptidase M66 domain. His298 is a Zn(2+) binding site. Residue Glu299 is part of the active site. His302 and His308 together coordinate Zn(2+).

Belongs to the dictomallein family. Zn(2+) is required as a cofactor.

It localises to the secreted. This chain is Dictomallein-2 (dtmlB), found in Dictyostelium discoideum (Social amoeba).